Consider the following 145-residue polypeptide: Brain and acute leukemia cytoplasmic protein (145 aa).

The N-myristoyl glycine moiety is linked to residue Gly2. Cys3 carries the S-palmitoyl cysteine lipid modification. The segment at 3 to 35 is interaction with CAMK2A; the sequence is CGGSRADAIEPRYYESWTRETESTWLTYTDSDA. The disordered stretch occupies residues 27-119; sequence WLTYTDSDAP…AKRDAKRMPA (93 aa). Residues 32–46 are compositionally biased toward low complexity; sequence DSDAPPSAAAPDSGP. Polar residues predominate over residues 83 to 108; it reads CETQCPNPQSLSSGPLTQKQNGLQTT. The segment covering 109–119 has biased composition (basic and acidic residues); sequence EAKRDAKRMPA.

Interacts with CAMK2A. In terms of processing, palmitoylation and myristoylation target the protein to the lipid rafts. Predominantly expressed in neuroectoderm-derived tissues. Expressed in the brain and spinal cord, and at low levels, in the adrenal gland. In the bone marrow, confined to the CD34+ progenitor cells. Not found in peripheral blood mononuclear cells, nor lymph nodes. Tends to be expressed at high levels in acute myeloid leukemia and glioblastoma cells.

The protein resides in the cytoplasm. The protein localises to the synapse. It is found in the synaptosome. It localises to the membrane raft. Its subcellular location is the postsynaptic density. May play a synaptic role at the postsynaptic lipid rafts possibly through interaction with CAMK2A. The sequence is that of Brain and acute leukemia cytoplasmic protein from Homo sapiens (Human).